The primary structure comprises 607 residues: Elongation factor 4 (607 aa).

The tr-type G domain occupies 11-193 (EKIRNFSIIA…QIVEKVPAPT (183 aa)). GTP contacts are provided by residues 23-28 (DHGKST) and 140-143 (NKID).

Belongs to the TRAFAC class translation factor GTPase superfamily. Classic translation factor GTPase family. LepA subfamily.

Its subcellular location is the cell membrane. It carries out the reaction GTP + H2O = GDP + phosphate + H(+). Required for accurate and efficient protein synthesis under certain stress conditions. May act as a fidelity factor of the translation reaction, by catalyzing a one-codon backward translocation of tRNAs on improperly translocated ribosomes. Back-translocation proceeds from a post-translocation (POST) complex to a pre-translocation (PRE) complex, thus giving elongation factor G a second chance to translocate the tRNAs correctly. Binds to ribosomes in a GTP-dependent manner. In Streptococcus pneumoniae serotype 19F (strain G54), this protein is Elongation factor 4.